The sequence spans 306 residues: ATP synthase gamma chain (306 aa).

The protein belongs to the ATPase gamma chain family. As to quaternary structure, F-type ATPases have 2 components, CF(1) - the catalytic core - and CF(0) - the membrane proton channel. CF(1) has five subunits: alpha(3), beta(3), gamma(1), delta(1), epsilon(1). CF(0) has three main subunits: a, b and c.

It is found in the cell membrane. Its function is as follows. Produces ATP from ADP in the presence of a proton gradient across the membrane. The gamma chain is believed to be important in regulating ATPase activity and the flow of protons through the CF(0) complex. This chain is ATP synthase gamma chain, found in Bifidobacterium animalis subsp. lactis (strain AD011).